Reading from the N-terminus, the 601-residue chain is NADH-quinone oxidoreductase subunit C/D (601 aa).

The interval 1 to 191 is NADH dehydrogenase I subunit C; sequence MKLTREFPSN…DPFMLDAVKQ (191 aa). The segment at 215-601 is NADH dehydrogenase I subunit D; it reads DYMFLNLGPN…IDFVMSDVDR (387 aa).

This sequence in the N-terminal section; belongs to the complex I 30 kDa subunit family. The protein in the C-terminal section; belongs to the complex I 49 kDa subunit family. In terms of assembly, NDH-1 is composed of 13 different subunits. Subunits NuoB, CD, E, F, and G constitute the peripheral sector of the complex.

The protein localises to the cell inner membrane. It catalyses the reaction a quinone + NADH + 5 H(+)(in) = a quinol + NAD(+) + 4 H(+)(out). NDH-1 shuttles electrons from NADH, via FMN and iron-sulfur (Fe-S) centers, to quinones in the respiratory chain. The immediate electron acceptor for the enzyme in this species is believed to be ubiquinone. Couples the redox reaction to proton translocation (for every two electrons transferred, four hydrogen ions are translocated across the cytoplasmic membrane), and thus conserves the redox energy in a proton gradient. The polypeptide is NADH-quinone oxidoreductase subunit C/D (Aeromonas hydrophila subsp. hydrophila (strain ATCC 7966 / DSM 30187 / BCRC 13018 / CCUG 14551 / JCM 1027 / KCTC 2358 / NCIMB 9240 / NCTC 8049)).